Here is an 865-residue protein sequence, read N- to C-terminus: Eukaryotic translation initiation factor 3 subunit C (865 aa).

Disordered regions lie at residues 1 to 92 (MSRF…AKDK) and 206 to 243 (EDEE…VGKG). Acidic residues-rich tracts occupy residues 16–54 (SSDE…DSDA) and 69–80 (DDDSSDEEDSDA). Positions 82–92 (VTTKVKSAKDK) are enriched in basic and acidic residues. Positions 226-235 (ATAEDEEDDE) are enriched in acidic residues. The PCI domain maps to 606–780 (FHMHINLELL…QTVIFRKGVE (175 aa)). The interval 801-865 (SNERTLEQRT…GGALGAAVRA (65 aa)) is disordered. Over residues 808-817 (QRTQGTSNAF) the composition is skewed to polar residues. A compositionally biased stretch (gly residues) spans 822–841 (GRGGRGGGRGRGGGRGGPRF).

It belongs to the eIF-3 subunit C family. As to quaternary structure, component of the eukaryotic translation initiation factor 3 (eIF-3) complex.

It is found in the cytoplasm. Functionally, component of the eukaryotic translation initiation factor 3 (eIF-3) complex, which is involved in protein synthesis of a specialized repertoire of mRNAs and, together with other initiation factors, stimulates binding of mRNA and methionyl-tRNAi to the 40S ribosome. The eIF-3 complex specifically targets and initiates translation of a subset of mRNAs involved in cell proliferation. The protein is Eukaryotic translation initiation factor 3 subunit C of Pyricularia oryzae (strain 70-15 / ATCC MYA-4617 / FGSC 8958) (Rice blast fungus).